The primary structure comprises 44 residues: Protein PsbN (44 aa).

The chain crosses the membrane as a helical span at residues 6–26 (FFFTFFLWFLLLSVTGYSVYV).

It belongs to the PsbN family.

Its subcellular location is the plastid. It localises to the chloroplast thylakoid membrane. Functionally, may play a role in photosystem I and II biogenesis. The protein is Protein PsbN of Chlamydomonas reinhardtii (Chlamydomonas smithii).